Consider the following 359-residue polypeptide: Peptide chain release factor 1 (359 aa).

At glutamine 236 the chain carries N5-methylglutamine.

Belongs to the prokaryotic/mitochondrial release factor family. Methylated by PrmC. Methylation increases the termination efficiency of RF1.

It is found in the cytoplasm. Peptide chain release factor 1 directs the termination of translation in response to the peptide chain termination codons UAG and UAA. The protein is Peptide chain release factor 1 of Streptococcus agalactiae serotype V (strain ATCC BAA-611 / 2603 V/R).